Here is a 502-residue protein sequence, read N- to C-terminus: Glycerol kinase (502 aa).

Thr14 serves as a coordination point for ADP. ATP contacts are provided by Thr14, Thr15, and Ser16. A sn-glycerol 3-phosphate-binding site is contributed by Thr14. Arg18 serves as a coordination point for ADP. Sn-glycerol 3-phosphate-binding residues include Arg84, Glu85, and Tyr136. Glycerol contacts are provided by Arg84, Glu85, and Tyr136. His232 is subject to Phosphohistidine; by HPr. Asp246 provides a ligand contact to sn-glycerol 3-phosphate. Residues Asp246 and Gln247 each contribute to the glycerol site. ADP contacts are provided by Thr268 and Gly311. Residues Thr268, Gly311, Gln315, and Gly412 each coordinate ATP. The ADP site is built by Gly412 and Asn416.

This sequence belongs to the FGGY kinase family. In terms of assembly, homotetramer and homodimer (in equilibrium). In terms of processing, the phosphoenolpyruvate-dependent sugar phosphotransferase system (PTS), including enzyme I, and histidine-containing protein (HPr) are required for the phosphorylation, which leads to the activation of the enzyme.

It carries out the reaction glycerol + ATP = sn-glycerol 3-phosphate + ADP + H(+). It participates in polyol metabolism; glycerol degradation via glycerol kinase pathway; sn-glycerol 3-phosphate from glycerol: step 1/1. Its activity is regulated as follows. Activated by phosphorylation and inhibited by fructose 1,6-bisphosphate (FBP). In terms of biological role, key enzyme in the regulation of glycerol uptake and metabolism. Catalyzes the phosphorylation of glycerol to yield sn-glycerol 3-phosphate. The sequence is that of Glycerol kinase from Streptococcus pneumoniae (strain Hungary19A-6).